The sequence spans 289 residues: 4-diphosphocytidyl-2-C-methyl-D-erythritol kinase (289 aa).

Lys10 is an active-site residue. 95–105 (PVSAGMGGGSA) serves as a coordination point for ATP. Asp137 is an active-site residue.

This sequence belongs to the GHMP kinase family. IspE subfamily.

The enzyme catalyses 4-CDP-2-C-methyl-D-erythritol + ATP = 4-CDP-2-C-methyl-D-erythritol 2-phosphate + ADP + H(+). It participates in isoprenoid biosynthesis; isopentenyl diphosphate biosynthesis via DXP pathway; isopentenyl diphosphate from 1-deoxy-D-xylulose 5-phosphate: step 3/6. Catalyzes the phosphorylation of the position 2 hydroxy group of 4-diphosphocytidyl-2C-methyl-D-erythritol. The polypeptide is 4-diphosphocytidyl-2-C-methyl-D-erythritol kinase (Ligilactobacillus salivarius (strain UCC118) (Lactobacillus salivarius)).